The primary structure comprises 674 residues: DNA ligase (674 aa).

NAD(+) contacts are provided by residues 34 to 38 (DAEYD), 84 to 85 (SL), and Glu-116. The active-site N6-AMP-lysine intermediate is Lys-118. The NAD(+) site is built by Arg-139, Glu-174, Lys-291, and Lys-315. Zn(2+)-binding residues include Cys-409, Cys-412, Cys-425, and Cys-430. One can recognise a BRCT domain in the interval 586–674 (RGEEALKGLT…TGKPVETLAS (89 aa)).

It belongs to the NAD-dependent DNA ligase family. LigA subfamily. Mg(2+) serves as cofactor. Mn(2+) is required as a cofactor.

It catalyses the reaction NAD(+) + (deoxyribonucleotide)n-3'-hydroxyl + 5'-phospho-(deoxyribonucleotide)m = (deoxyribonucleotide)n+m + AMP + beta-nicotinamide D-nucleotide.. In terms of biological role, DNA ligase that catalyzes the formation of phosphodiester linkages between 5'-phosphoryl and 3'-hydroxyl groups in double-stranded DNA using NAD as a coenzyme and as the energy source for the reaction. It is essential for DNA replication and repair of damaged DNA. This chain is DNA ligase, found in Thermus scotoductus.